Here is a 363-residue protein sequence, read N- to C-terminus: MSDISPDYPTLQSIGWPWPGPPEEAAWKAVFAAHPQALPARVVEQHRTGYVVADTPEASLKAESLPEWQRPRFPSHERAAVGDWVLMEGKRIVALLPRRTSIKRGAAGAHYHQQVIAANIDTVFIVCGLDADFNPRRIERYLLLVGGGGAQPVVVLTKADQTEHAEDALAVLEELEAQNIPLRALNAKDPASVAALRPWLGDGRTAVLVGSSGAGKSTLTNTLLGTEKMKTNGVRENDSRGRHTTTHRALIPLPSGACLIDTPGMRELKPTGEEDLAEGGFSDVEALAAQCRFNDCAHIAEPGCAVRAAIEADLLDPERVANYMKLRVEVASAAEKLATRVAQNNRGKGSGKRPASIDRPGRR.

One can recognise a CP-type G domain in the interval 112-268 (HQQVIAANID…LIDTPGMREL (157 aa)). Residues 157–160 (TKAD) and 210–218 (GSSGAGKST) contribute to the GTP site. Positions 291, 296, 298, and 304 each coordinate Zn(2+). Residues 340–363 (RVAQNNRGKGSGKRPASIDRPGRR) are disordered.

The protein belongs to the TRAFAC class YlqF/YawG GTPase family. RsgA subfamily. In terms of assembly, monomer. Associates with 30S ribosomal subunit, binds 16S rRNA. It depends on Zn(2+) as a cofactor.

It localises to the cytoplasm. Functionally, one of several proteins that assist in the late maturation steps of the functional core of the 30S ribosomal subunit. Helps release RbfA from mature subunits. May play a role in the assembly of ribosomal proteins into the subunit. Circularly permuted GTPase that catalyzes slow GTP hydrolysis, GTPase activity is stimulated by the 30S ribosomal subunit. The polypeptide is Small ribosomal subunit biogenesis GTPase RsgA (Xanthomonas oryzae pv. oryzae (strain PXO99A)).